Here is a 300-residue protein sequence, read N- to C-terminus: tRNA-cytidine(32) 2-sulfurtransferase (300 aa).

Positions 57 to 62 (SGGKDS) match the PP-loop motif motif. Residues Cys-132, Cys-135, and Cys-223 each coordinate [4Fe-4S] cluster.

This sequence belongs to the TtcA family. Homodimer. Mg(2+) serves as cofactor. The cofactor is [4Fe-4S] cluster.

It is found in the cytoplasm. The enzyme catalyses cytidine(32) in tRNA + S-sulfanyl-L-cysteinyl-[cysteine desulfurase] + AH2 + ATP = 2-thiocytidine(32) in tRNA + L-cysteinyl-[cysteine desulfurase] + A + AMP + diphosphate + H(+). It functions in the pathway tRNA modification. In terms of biological role, catalyzes the ATP-dependent 2-thiolation of cytidine in position 32 of tRNA, to form 2-thiocytidine (s(2)C32). The sulfur atoms are provided by the cysteine/cysteine desulfurase (IscS) system. This Xanthomonas campestris pv. campestris (strain B100) protein is tRNA-cytidine(32) 2-sulfurtransferase.